The sequence spans 457 residues: Galactose/lactose metabolism regulatory protein GAL80 (457 aa).

The disordered stretch occupies residues 333–364 (NGTDNNGAAAIKDKEKVTKSPSPSTGTSEEEQ).

It to yeast GAL80.

In terms of biological role, this protein is a negative regulator for the gene expression of the lactose/galactose metabolic genes. It seems to block activation by the transcriptional activator LAC9 in the absence of an inducing sugar. The polypeptide is Galactose/lactose metabolism regulatory protein GAL80 (GAL80) (Kluyveromyces lactis (strain ATCC 8585 / CBS 2359 / DSM 70799 / NBRC 1267 / NRRL Y-1140 / WM37) (Yeast)).